The chain runs to 139 residues: Peptide methionine sulfoxide reductase MsrB (139 aa).

Residues 8 to 130 (DREWQRELSP…NSASLQLKTQ (123 aa)) form the MsrB domain. 4 residues coordinate Zn(2+): cysteine 47, cysteine 50, cysteine 96, and cysteine 99. Cysteine 119 functions as the Nucleophile in the catalytic mechanism.

Belongs to the MsrB Met sulfoxide reductase family. It depends on Zn(2+) as a cofactor.

The enzyme catalyses L-methionyl-[protein] + [thioredoxin]-disulfide + H2O = L-methionyl-(R)-S-oxide-[protein] + [thioredoxin]-dithiol. The polypeptide is Peptide methionine sulfoxide reductase MsrB (Acinetobacter baumannii (strain SDF)).